A 321-amino-acid polypeptide reads, in one-letter code: Lipoyl synthase (321 aa).

Positions 68, 73, 79, 94, 98, 101, and 308 each coordinate [4Fe-4S] cluster. The Radical SAM core domain occupies 80–297 (FNHGTATFMI…KALADELGFT (218 aa)).

The protein belongs to the radical SAM superfamily. Lipoyl synthase family. [4Fe-4S] cluster serves as cofactor.

It localises to the cytoplasm. It catalyses the reaction [[Fe-S] cluster scaffold protein carrying a second [4Fe-4S](2+) cluster] + N(6)-octanoyl-L-lysyl-[protein] + 2 oxidized [2Fe-2S]-[ferredoxin] + 2 S-adenosyl-L-methionine + 4 H(+) = [[Fe-S] cluster scaffold protein] + N(6)-[(R)-dihydrolipoyl]-L-lysyl-[protein] + 4 Fe(3+) + 2 hydrogen sulfide + 2 5'-deoxyadenosine + 2 L-methionine + 2 reduced [2Fe-2S]-[ferredoxin]. It participates in protein modification; protein lipoylation via endogenous pathway; protein N(6)-(lipoyl)lysine from octanoyl-[acyl-carrier-protein]: step 2/2. Its function is as follows. Catalyzes the radical-mediated insertion of two sulfur atoms into the C-6 and C-8 positions of the octanoyl moiety bound to the lipoyl domains of lipoate-dependent enzymes, thereby converting the octanoylated domains into lipoylated derivatives. This chain is Lipoyl synthase, found in Shewanella oneidensis (strain ATCC 700550 / JCM 31522 / CIP 106686 / LMG 19005 / NCIMB 14063 / MR-1).